The primary structure comprises 197 residues: A-type ATP synthase subunit E (197 aa).

It belongs to the V-ATPase E subunit family. In terms of assembly, has multiple subunits with at least A(3), B(3), C, D, E, F, H, I and proteolipid K(x).

It is found in the cell membrane. In terms of biological role, component of the A-type ATP synthase that produces ATP from ADP in the presence of a proton gradient across the membrane. This Thermococcus gammatolerans (strain DSM 15229 / JCM 11827 / EJ3) protein is A-type ATP synthase subunit E.